Consider the following 541-residue polypeptide: Phosphatidylethanolamine transferase Mcr-1 (541 aa).

Over 1–14 the chain is Cytoplasmic; the sequence is MMQHTSVWYRRSVS. A helical transmembrane segment spans residues 15-35; it reads PFVLVASVAVFLTATANLTFF. Residues 36-47 lie on the Periplasmic side of the membrane; the sequence is DKISQTYPIADN. Residues 48-68 form a helical membrane-spanning segment; sequence LGFVLTIAVVLFGAMLLITTL. Topologically, residues 69–73 are cytoplasmic; sequence LSSYR. Residues 74–94 form a helical membrane-spanning segment; sequence YVLKPVLILLLIMGAVTSYFT. The Periplasmic portion of the chain corresponds to 95 to 122; sequence DTYGTVYDTTMLQNALQTDQAETKDLLN. A helical transmembrane segment spans residues 123–143; that stretch reads AAFIMRIIGLGVLPSLLVAFV. Residues 144 to 157 are Cytoplasmic-facing; sequence KVDYPTWGKGLMRR. Residues 158–178 form a helical membrane-spanning segment; the sequence is LGLIVASLALILLPVVAFSSH. The Periplasmic segment spans residues 179–541; that stretch reads YASFFRVHKP…KVKDRTAFIR (363 aa). Zn(2+)-binding residues include glutamate 246 and threonine 285. 3 cysteine pairs are disulfide-bonded: cysteine 281-cysteine 291, cysteine 356-cysteine 364, and cysteine 414-cysteine 422. Threonine 285 is modified (phosphothreonine). Residues aspartate 465 and histidine 466 each contribute to the Zn(2+) site.

This sequence belongs to the phosphoethanolamine transferase family. As to quaternary structure, monomer. Phosphorylated at Thr-285; may represent an intermediate in the catalytic mechanism.

Its subcellular location is the cell inner membrane. It carries out the reaction lipid A (E. coli) + a 1,2-diacyl-sn-glycero-3-phosphoethanolamine + H(+) = lipid A 4'-(2-aminoethyl diphosphate) (E. coli) + a 1,2-diacyl-sn-glycerol. Its activity is regulated as follows. EDTA may inhibit activity. May be inhibited by ethanolamine. Functionally, probably catalyzes the addition of a phosphoethanolamine moiety to lipid A. Phosphoethanolamine modification of lipid A confers polymyxin resistance. Confers resistance to polymyxin-type antibiotics such as colistin; in the E.coli strain W3110. This Escherichia coli protein is Phosphatidylethanolamine transferase Mcr-1 (mcr1).